The sequence spans 524 residues: Phytoene desaturase (neurosporene-forming) (524 aa).

12-45 (VVIGAGLGGLAAAMRLGAKGYKVTVVDRLDRPGG) contributes to the FAD binding site. Residues 500–524 (PDAPKPETPAAAAPKARTPRAKAAQ) form a disordered region. A compositionally biased stretch (low complexity) spans 507–524 (TPAAAAPKARTPRAKAAQ).

It belongs to the carotenoid/retinoid oxidoreductase family. FAD is required as a cofactor.

It carries out the reaction 15-cis-phytoene + 3 A = all-trans-neurosporene + 3 AH2. It functions in the pathway carotenoid biosynthesis. With respect to regulation, is inhibited by diphenylamine (DPA). Is also slightly inhibited by NAD, NADP or ATP in the presence of FAD. Functionally, converts phytoene into all-trans-neurosporene as the major product, via the intermediary of phytofluene and zeta-carotene, by the introduction of three double bonds. Both intermediates, phytofluene and zeta-carotene, can be used as substrates and converted to neurosporene. 1,2-epoxy phytoene is also a suitable substrate whereas the C30 diapophytoene is not. In Rhodobacter capsulatus (strain ATCC BAA-309 / NBRC 16581 / SB1003), this protein is Phytoene desaturase (neurosporene-forming) (crtI).